The following is a 440-amino-acid chain: UDP-N-acetylmuramoylalanine--D-glutamate ligase (440 aa).

ATP is bound at residue 115-121 (GSNGKST).

The protein belongs to the MurCDEF family.

Its subcellular location is the cytoplasm. It catalyses the reaction UDP-N-acetyl-alpha-D-muramoyl-L-alanine + D-glutamate + ATP = UDP-N-acetyl-alpha-D-muramoyl-L-alanyl-D-glutamate + ADP + phosphate + H(+). It participates in cell wall biogenesis; peptidoglycan biosynthesis. In terms of biological role, cell wall formation. Catalyzes the addition of glutamate to the nucleotide precursor UDP-N-acetylmuramoyl-L-alanine (UMA). In Aliivibrio fischeri (strain MJ11) (Vibrio fischeri), this protein is UDP-N-acetylmuramoylalanine--D-glutamate ligase.